Reading from the N-terminus, the 419-residue chain is Enolase (419 aa).

Gln-161 is a binding site for (2R)-2-phosphoglycerate. Glu-205 functions as the Proton donor in the catalytic mechanism. Mg(2+) is bound by residues Asp-240, Glu-283, and Asp-309. Residues Lys-334, Arg-363, Ser-364, and Lys-385 each contribute to the (2R)-2-phosphoglycerate site. Residue Lys-334 is the Proton acceptor of the active site.

This sequence belongs to the enolase family. Mg(2+) serves as cofactor.

The protein localises to the cytoplasm. It is found in the secreted. Its subcellular location is the cell surface. The catalysed reaction is (2R)-2-phosphoglycerate = phosphoenolpyruvate + H2O. It functions in the pathway carbohydrate degradation; glycolysis; pyruvate from D-glyceraldehyde 3-phosphate: step 4/5. Its function is as follows. Catalyzes the reversible conversion of 2-phosphoglycerate (2-PG) into phosphoenolpyruvate (PEP). It is essential for the degradation of carbohydrates via glycolysis. The polypeptide is Enolase (Saccharolobus islandicus (strain Y.N.15.51 / Yellowstone #2) (Sulfolobus islandicus)).